The following is a 158-amino-acid chain: Phosphopantetheine adenylyltransferase (158 aa).

Thr-10 lines the substrate pocket. Residues 10–11 (TF) and His-18 contribute to the ATP site. Positions 42, 74, and 88 each coordinate substrate. Residues 89-91 (GLR), Glu-99, and 124-130 (NSFISST) each bind ATP.

This sequence belongs to the bacterial CoaD family. Homohexamer. Mg(2+) serves as cofactor.

It localises to the cytoplasm. The catalysed reaction is (R)-4'-phosphopantetheine + ATP + H(+) = 3'-dephospho-CoA + diphosphate. It participates in cofactor biosynthesis; coenzyme A biosynthesis; CoA from (R)-pantothenate: step 4/5. Functionally, reversibly transfers an adenylyl group from ATP to 4'-phosphopantetheine, yielding dephospho-CoA (dPCoA) and pyrophosphate. This is Phosphopantetheine adenylyltransferase from Shewanella loihica (strain ATCC BAA-1088 / PV-4).